We begin with the raw amino-acid sequence, 418 residues long: FK506-binding protein 3 (418 aa).

3 disordered regions span residues 49–133 (PSTL…DDEF), 172–273 (SLTG…ETKK), and 289–309 (LEEG…KPKT). Residues 61–89 (YDDEDDAGGLLGDYDEDELDISEEEEEEE) show a composition bias toward acidic residues. Basic residues predominate over residues 93–103 (KSKKGKGKGKS). Acidic residues-rich tracts occupy residues 108-133 (EEEE…DDEF) and 186-224 (GYDD…DASD). A compositionally biased stretch (basic and acidic residues) spans 225–239 (VEAKIQELVEKEQSK). Residues 251-264 (PEEEEEEEEEEEEE) are compositionally biased toward acidic residues. The region spanning 332-418 (GSKVGMRYIG…TFDVKLVSLK (87 aa)) is the PPIase FKBP-type domain.

This sequence belongs to the FKBP-type PPIase family. FKBP3/4 subfamily.

It is found in the nucleus. It localises to the nucleolus. It catalyses the reaction [protein]-peptidylproline (omega=180) = [protein]-peptidylproline (omega=0). Inhibited by both FK506 and rapamycin. PPIases accelerate the folding of proteins. It catalyzes the cis-trans isomerization of proline imidic peptide bonds in oligopeptides. This is FK506-binding protein 3 (FPR3) from Kluyveromyces lactis (strain ATCC 8585 / CBS 2359 / DSM 70799 / NBRC 1267 / NRRL Y-1140 / WM37) (Yeast).